Consider the following 235-residue polypeptide: Large ribosomal subunit protein uL1 (235 aa).

The protein belongs to the universal ribosomal protein uL1 family. As to quaternary structure, part of the 50S ribosomal subunit.

Binds directly to 23S rRNA. The L1 stalk is quite mobile in the ribosome, and is involved in E site tRNA release. Its function is as follows. Protein L1 is also a translational repressor protein, it controls the translation of the L11 operon by binding to its mRNA. This Prochlorococcus marinus (strain MIT 9301) protein is Large ribosomal subunit protein uL1.